A 275-amino-acid polypeptide reads, in one-letter code: MATYFVGDLQGCYDELQLLLERVDFNPTQDKLYLVGDLVARGDKSLECLCFVKSLGNAAQTVLGNHDLHLIATALDIKKVKPRDRVDAIFNAPDFDEQIHWLRHQPLLVHSEELNFLMSHAGISPDWDLKTAKSCAAEVEQILQHGDFHYLIENMYSEQPDRWSPDLQGLARHRYIINAFTRMRFCYLDHRFDFACKSPLKDAPAELTPWFNLDNPLYKQIPIVFGHWASLVDEPTPKGIYALDTGCVWNNRMTMLRWEDKQFFTQSAVKNYSDF.

The protein belongs to the Ap4A hydrolase family.

The enzyme catalyses P(1),P(4)-bis(5'-adenosyl) tetraphosphate + H2O = 2 ADP + 2 H(+). Functionally, hydrolyzes diadenosine 5',5'''-P1,P4-tetraphosphate to yield ADP. The polypeptide is Bis(5'-nucleosyl)-tetraphosphatase, symmetrical (Haemophilus influenzae (strain PittGG)).